The sequence spans 439 residues: MDCFAETEGKRAHDPLYQRRAAAAATPATGVPVDDVDKVVDVPGAVIVGAGPAGVAVGALLGLRGVAYVVLERCGCIASLWRHRTYDRLCLHLPKRFCELPLRPFPASFPEYPTRDQFLGYLDAYAREFGVEPVFRRAVISAEYDGESWWVYTREVVAAAAGGEQAVLGCTMTVYRSRWLVVATGENAEPVVPEMDGAGRFKGQMMHSSEYRNGDGYAGKKVLVVGCGNSGMEVSLDLCNHNARASMVVRDTVHVLPREILGFSTFGLSMWLLRWLSVQTVDWLVLLLSFLVFGDTARLGIPRPSLGPFELKSVSGKTPVLDVGTLAKIKSGDIKVTPAIQCFQEHGVEFVDGSTEEFDVVILATGYKSNVPYWLKEKEFFSEKDGFPRKGNAWKGQNGLYAVGFSRRGLSGVSMDANNIVQDIVQRLHDMGYERSENN.

49–54 is an FAD binding site; that stretch reads GAGPAG. NADP(+) is bound at residue 226–231; it reads GCGNSG.

It belongs to the FMO family. It depends on FAD as a cofactor.

It carries out the reaction indole-3-pyruvate + NADPH + O2 + H(+) = (indol-3-yl)acetate + CO2 + NADP(+) + H2O. Functionally, involved in auxin biosynthesis in anthers. The chain is Indole-3-pyruvate monooxygenase YUCCA4 from Oryza sativa subsp. japonica (Rice).